A 694-amino-acid chain; its full sequence is DNA primase (694 aa).

Residues 41-65 (CPFHDDKSPSFTVSPAKQFYYCFSC) form a CHC2-type zinc finger. One can recognise a Toprim domain in the interval 265 to 348 (DQAVVVEGYF…QGQVQLRVLN (84 aa)). The Mg(2+) site is built by Glu271, Asp317, and Asp319.

The protein belongs to the DnaG primase family. As to quaternary structure, monomer. Interacts with DnaB. Zn(2+) is required as a cofactor. Requires Mg(2+) as cofactor.

The enzyme catalyses ssDNA + n NTP = ssDNA/pppN(pN)n-1 hybrid + (n-1) diphosphate.. Its function is as follows. RNA polymerase that catalyzes the synthesis of short RNA molecules used as primers for DNA polymerase during DNA replication. This chain is DNA primase, found in Synechococcus elongatus (strain ATCC 33912 / PCC 7942 / FACHB-805) (Anacystis nidulans R2).